A 419-amino-acid chain; its full sequence is UDP-N-acetylglucosamine 1-carboxyvinyltransferase 2 (419 aa).

24 to 25 (KN) contacts phosphoenolpyruvate. UDP-N-acetyl-alpha-D-glucosamine is bound at residue arginine 94. The active-site Proton donor is cysteine 118. Cysteine 118 bears the 2-(S-cysteinyl)pyruvic acid O-phosphothioketal mark. UDP-N-acetyl-alpha-D-glucosamine contacts are provided by residues 123 to 127 (RPIDQ), aspartate 307, and isoleucine 329.

It belongs to the EPSP synthase family. MurA subfamily.

The protein resides in the cytoplasm. The enzyme catalyses phosphoenolpyruvate + UDP-N-acetyl-alpha-D-glucosamine = UDP-N-acetyl-3-O-(1-carboxyvinyl)-alpha-D-glucosamine + phosphate. Its pathway is cell wall biogenesis; peptidoglycan biosynthesis. In terms of biological role, cell wall formation. Adds enolpyruvyl to UDP-N-acetylglucosamine. The polypeptide is UDP-N-acetylglucosamine 1-carboxyvinyltransferase 2 (Staphylococcus epidermidis (strain ATCC 35984 / DSM 28319 / BCRC 17069 / CCUG 31568 / BM 3577 / RP62A)).